We begin with the raw amino-acid sequence, 651 residues long: Chaperone protein HtpG (651 aa).

The interval 1–353 (MAAHVEQLEF…AQDMSLNVSR (353 aa)) is a; substrate-binding. Residues 354–569 (EILQQDRQIR…TFGITPALAR (216 aa)) form a b region. The tract at residues 570–651 (MYRASGQPVP…RLTRTVGDQT (82 aa)) is c.

This sequence belongs to the heat shock protein 90 family. In terms of assembly, homodimer.

Its subcellular location is the cytoplasm. Its function is as follows. Molecular chaperone. Has ATPase activity. This is Chaperone protein HtpG from Mycolicibacterium vanbaalenii (strain DSM 7251 / JCM 13017 / BCRC 16820 / KCTC 9966 / NRRL B-24157 / PYR-1) (Mycobacterium vanbaalenii).